The chain runs to 386 residues: Succinate--CoA ligase [ADP-forming] subunit beta (386 aa).

Positions 9–244 (KEILRKYGVP…HDEEDPLETR (236 aa)) constitute an ATP-grasp domain. ATP is bound by residues lysine 46, 53 to 55 (GRG), glutamate 99, cysteine 102, and glutamate 107. Positions 199 and 213 each coordinate Mg(2+). Substrate is bound by residues asparagine 264 and 321–323 (GIM).

Belongs to the succinate/malate CoA ligase beta subunit family. Heterotetramer of two alpha and two beta subunits. The cofactor is Mg(2+).

It carries out the reaction succinate + ATP + CoA = succinyl-CoA + ADP + phosphate. The catalysed reaction is GTP + succinate + CoA = succinyl-CoA + GDP + phosphate. It functions in the pathway carbohydrate metabolism; tricarboxylic acid cycle; succinate from succinyl-CoA (ligase route): step 1/1. In terms of biological role, succinyl-CoA synthetase functions in the citric acid cycle (TCA), coupling the hydrolysis of succinyl-CoA to the synthesis of either ATP or GTP and thus represents the only step of substrate-level phosphorylation in the TCA. The beta subunit provides nucleotide specificity of the enzyme and binds the substrate succinate, while the binding sites for coenzyme A and phosphate are found in the alpha subunit. This chain is Succinate--CoA ligase [ADP-forming] subunit beta, found in Rickettsia prowazekii (strain Madrid E).